We begin with the raw amino-acid sequence, 303 residues long: MKKSSMDKEHKQSKLVLKENGSIGLVYRLETAQAVSLAKKVAEFLKERGFEVFTCPDQKVVAGTKAAKTKKHMDDLKLVIVLGGDGTYLRAVRLLEGRSVPILGFNMGSLGFLTAHSADSCFDIIEKTLEGKMVQRPRSMIYSKILRKGKVRAEYHALNDMVIERGSMSQLINTAIYSEKFLVSQVKADGFIVASPSGSTAYNLAAGGPICHPESPVFVVTPVAPHSLTSRPLLFPDDRELSFRLEGKTQKAHFIVDGQKMTELTADDEVIVSRSCYDHWMVREANHNYFHLLREKLKFGDRN.

Catalysis depends on D85, which acts as the Proton acceptor. NAD(+) contacts are provided by residues 85-86 (DG), R90, 159-160 (ND), K187, D189, A224, and Q259.

Belongs to the NAD kinase family. A divalent metal cation is required as a cofactor.

The protein resides in the cytoplasm. It catalyses the reaction NAD(+) + ATP = ADP + NADP(+) + H(+). Functionally, involved in the regulation of the intracellular balance of NAD and NADP, and is a key enzyme in the biosynthesis of NADP. Catalyzes specifically the phosphorylation on 2'-hydroxyl of the adenosine moiety of NAD to yield NADP. The polypeptide is NAD kinase (Bdellovibrio bacteriovorus (strain ATCC 15356 / DSM 50701 / NCIMB 9529 / HD100)).